The sequence spans 236 residues: Mitochondrial-abundant heat soluble protein (236 aa).

The transit peptide at 1 to 73 (MSRYLLRDVQ…AARAGVVLRG (73 aa)) directs the protein to the mitochondrion. Disordered stretches follow at residues 102–135 (RIHS…NEAA) and 165–209 (RSNG…EIVA). Polar residues-rich tracts occupy residues 105-126 (SQSS…NSPQ) and 192-202 (APDSSKNTKSV). An MAHS motif motif is present at residues 126 to 143 (QPEGKANEAAERAKQFMN).

It localises to the mitochondrion. Its function is as follows. Mitochondrial heat soluble protein acting as a molecular shield in water-deficient condition. This Ramazzottius varieornatus (Water bear) protein is Mitochondrial-abundant heat soluble protein.